The chain runs to 338 residues: Glycerol-3-phosphate dehydrogenase [NAD(P)+] (338 aa).

Residues S13, W14, and K108 each contribute to the NADPH site. Sn-glycerol 3-phosphate-binding residues include K108, G139, and S141. A143 is an NADPH binding site. The sn-glycerol 3-phosphate site is built by K194, D247, S257, R258, and N259. K194 acts as the Proton acceptor in catalysis. R258 contacts NADPH. The NADPH site is built by V282 and E284.

This sequence belongs to the NAD-dependent glycerol-3-phosphate dehydrogenase family.

The protein resides in the cytoplasm. The catalysed reaction is sn-glycerol 3-phosphate + NAD(+) = dihydroxyacetone phosphate + NADH + H(+). The enzyme catalyses sn-glycerol 3-phosphate + NADP(+) = dihydroxyacetone phosphate + NADPH + H(+). Its pathway is membrane lipid metabolism; glycerophospholipid metabolism. In terms of biological role, catalyzes the reduction of the glycolytic intermediate dihydroxyacetone phosphate (DHAP) to sn-glycerol 3-phosphate (G3P), the key precursor for phospholipid synthesis. This Streptococcus pyogenes serotype M12 (strain MGAS9429) protein is Glycerol-3-phosphate dehydrogenase [NAD(P)+].